Here is a 160-residue protein sequence, read N- to C-terminus: Phosphopantetheine adenylyltransferase (160 aa).

Serine 9 is a substrate binding site. Residues 9–10 (SF) and histidine 17 each bind ATP. Substrate contacts are provided by lysine 41, threonine 73, and arginine 87. Residues 88-90 (GMR), glutamate 98, and 123-129 (YTFFSSS) contribute to the ATP site.

The protein belongs to the bacterial CoaD family. In terms of assembly, homohexamer. Mg(2+) is required as a cofactor.

It localises to the cytoplasm. It carries out the reaction (R)-4'-phosphopantetheine + ATP + H(+) = 3'-dephospho-CoA + diphosphate. It functions in the pathway cofactor biosynthesis; coenzyme A biosynthesis; CoA from (R)-pantothenate: step 4/5. Reversibly transfers an adenylyl group from ATP to 4'-phosphopantetheine, yielding dephospho-CoA (dPCoA) and pyrophosphate. The protein is Phosphopantetheine adenylyltransferase of Roseiflexus sp. (strain RS-1).